A 651-amino-acid chain; its full sequence is Acetyl-coenzyme A synthetase (651 aa).

Residues 189–192 (RGGK), Thr-311, and Asn-335 contribute to the CoA site. ATP-binding positions include 387–389 (GEP), 411–416 (DTWWQT), Asp-500, and Arg-515. Residue Ser-523 coordinates CoA. Arg-526 lines the ATP pocket. Mg(2+) is bound by residues Val-537, His-539, and Val-542. A CoA-binding site is contributed by Arg-586. Position 611 is an N6-acetyllysine (Lys-611).

Belongs to the ATP-dependent AMP-binding enzyme family. Requires Mg(2+) as cofactor. Post-translationally, acetylated. Deacetylation by the SIR2-homolog deacetylase activates the enzyme.

The catalysed reaction is acetate + ATP + CoA = acetyl-CoA + AMP + diphosphate. Catalyzes the conversion of acetate into acetyl-CoA (AcCoA), an essential intermediate at the junction of anabolic and catabolic pathways. AcsA undergoes a two-step reaction. In the first half reaction, AcsA combines acetate with ATP to form acetyl-adenylate (AcAMP) intermediate. In the second half reaction, it can then transfer the acetyl group from AcAMP to the sulfhydryl group of CoA, forming the product AcCoA. The polypeptide is Acetyl-coenzyme A synthetase (Brucella melitensis biotype 1 (strain ATCC 23456 / CCUG 17765 / NCTC 10094 / 16M)).